A 1484-amino-acid chain; its full sequence is Cystic fibrosis transmembrane conductance regulator (1484 aa).

Over 1 to 77 (MQRSPLEKAS…KLINALRRCF (77 aa)) the chain is Cytoplasmic. Residues 78–98 (FWRFMFYGIILYLGEVTKSVQ) form a helical membrane-spanning segment. The 285-residue stretch at 81-365 (FMFYGIILYL…WAVQTWYDSL (285 aa)) folds into the ABC transmembrane type-1 1 domain. The Extracellular portion of the chain corresponds to 99-122 (PLLLGRIIASYDPDNKEERSIAIY). A helical membrane pass occupies residues 123 to 146 (LGIGLCLLFVMRTLLLHPAIFGLH). Residues 147-195 (RIGMQMRIAMFSLIYKKTLKLSSRVLDKISIGQLVSLLSNNLNKFDEGL) are Cytoplasmic-facing. Residues 196-216 (ALAHFVWIAPLQVTLLMGLLW) traverse the membrane as a helical segment. Over 217-222 (DLLQAS) the chain is Extracellular. A helical transmembrane segment spans residues 223–243 (AFCGLAFLIVLALFQAGLGRM). At 244 to 298 (MMKYRDQRAGKINERLVITSEMIENIQSVKAYCWEEAMEKMIESIRQTELKLTRK) the chain is on the cytoplasmic side. The helical transmembrane segment at 299-319 (AAYVRYFNSSAFFFSGFFVVF) threads the bilayer. The Extracellular segment spans residues 320–339 (LSVLPYALIKTIVLRKIFTT). A helical membrane pass occupies residues 340–358 (ISFCIVLRMAVTRQFPWAV). The Cytoplasmic portion of the chain corresponds to 359–860 (QTWYDSLGAI…YLRYVTIHKS (502 aa)). ATP is bound by residues W401, S434, 458-465 (GSTGAGKT), and Q493. The ABC transporter 1 domain occupies 423-646 (NADNSLFFSN…RPDFSSKLMG (224 aa)). C524 carries S-palmitoyl cysteine lipidation. Phosphoserine occurs at positions 549 and 660. The interval 654–833 (SAERRNSIIT…EEINEEDLKE (180 aa)) is disordered R region. Position 670 is a phosphoserine; by PKA (S670). Position 686 is a phosphoserine (S686). A Glycyl lysine isopeptide (Lys-Gly) (interchain with G-Cter in ubiquitin) cross-link involves residue K688. Residues S700 and S712 each carry the phosphoserine modification. T717 bears the Phosphothreonine mark. S737, S769, S792, S797, and S815 each carry phosphoserine. The chain crosses the membrane as a helical span at residues 861-881 (LVFVLIWCLVIFLAEVAISLV). Positions 861–1157 (LVFVLIWCLV…AVNSSIDVDS (297 aa)) constitute an ABC transmembrane type-1 2 domain. The Extracellular portion of the chain corresponds to 882–920 (VLWLLKKTASQDKGNSTQSINSSYTVIFTSTSTYYVFYI). N-linked (GlcNAc...) asparagine glycans are attached at residues N896 and N902. Residues 921–941 (YVGVADTLLALGFFRGLPLVH) traverse the membrane as a discontinuously helical segment. Topologically, residues 942-992 (TLITVSKILHHKMLHAVLQAPMSTLNALKAGGILNRFSKDIAILDDLLPLT) are cytoplasmic. A helical transmembrane segment spans residues 993 to 1013 (IFDFVQLLLIVIGAVTVVSAL). The Extracellular segment spans residues 1014-1015 (QP). Residues 1016-1036 (YIFLATVPVIAAFIMLRAYFL) traverse the membrane as a helical segment. At 1037 to 1097 (HTSQQLKQLE…TANWFLYLST (61 aa)) the chain is on the cytoplasmic side. A helical transmembrane segment spans residues 1098 to 1118 (LRWFQMRMEIIFVIFFIAITF). At 1119 to 1132 (ISILTTGEGVGAVG) the chain is on the extracellular side. Residues 1133 to 1153 (IILTLAMNIMGTLQWAVNSSI) traverse the membrane as a helical segment. Over 1154 to 1484 (DVDSLMRSVS…TEEEVQETRL (331 aa)) the chain is Cytoplasmic. Residues 1214-1447 (MTVKDLTAKY…KSLFRQAISP (234 aa)) enclose the ABC transporter 2 domain. Residues Y1223 and 1248–1255 (GRTGSGKS) contribute to the ATP site. The interval 1390-1484 (RTLKQAFADC…TEEEVQETRL (95 aa)) is interaction with GORASP2. C1399 carries the S-palmitoyl cysteine lipid modification. 2 positions are modified to phosphoserine: S1448 and S1460. The span at 1456–1465 (HRNSSKHKSR) shows a compositional bias: basic residues. The disordered stretch occupies residues 1456-1484 (HRNSSKHKSRSQIAALKEETEEEVQETRL). Acidic residues predominate over residues 1474–1484 (ETEEEVQETRL). The short motif at 1482 to 1484 (TRL) is the PDZ-binding element.

It belongs to the ABC transporter superfamily. ABCC family. CFTR transporter (TC 3.A.1.202) subfamily. As to quaternary structure, monomer; does not require oligomerization for channel activity. May form oligomers in the membrane. Interacts with SLC26A3, SLC26A6 and NHERF1. Interacts with SHANK2. Interacts with MYO6. Interacts (via C-terminus) with GOPC (via PDZ domain); this promotes CFTR internalization and thereby decreases channel activity. Interacts with SLC4A7 through NHERF1. Found in a complex with MYO5B and RAB11A. Interacts with ANO1. Interacts with SLC26A8. Interacts with AHCYL1; the interaction increases CFTR activity. Interacts with CSE1L. The core-glycosylated form interacts with GORASP2 (via PDZ GRASP-type 1 domain) in respone to ER stress. Interacts with MARCHF2; the interaction leads to CFTR ubiqtuitination and degradation. Interacts with ADGRG2. Post-translationally, N-glycosylated. Phosphorylated; cAMP treatment promotes phosphorylation and activates the channel. Dephosphorylation decreases the ATPase activity (in vitro). Phosphorylation at PKA sites activates the channel. Phosphorylation at PKC sites enhances the response to phosphorylation by PKA. Phosphorylated by AMPK; this inhibits channel activity. In terms of processing, ubiquitinated, leading to its degradation in the lysosome. Deubiquitination by USP10 in early endosomes enhances its endocytic recycling to the cell membrane. Ubiquitinated by RNF185 during ER stress. Ubiquitinated by MARCHF2.

The protein localises to the apical cell membrane. It is found in the early endosome membrane. It localises to the cell membrane. Its subcellular location is the recycling endosome membrane. The protein resides in the endoplasmic reticulum membrane. The protein localises to the nucleus. The catalysed reaction is ATP + H2O + closed Cl(-) channel = ADP + phosphate + open Cl(-) channel.. The enzyme catalyses chloride(in) = chloride(out). It catalyses the reaction hydrogencarbonate(in) = hydrogencarbonate(out). It carries out the reaction ATP + H2O = ADP + phosphate + H(+). Its function is as follows. Epithelial ion channel that plays an important role in the regulation of epithelial ion and water transport and fluid homeostasis. Mediates the transport of chloride ions across the cell membrane. Possesses an intrinsic ATPase activity and utilizes ATP to gate its channel; the passive flow of anions through the channel is gated by cycles of ATP binding and hydrolysis by the ATP-binding domains. The ion channel is also permeable to HCO(3)(-); selectivity depends on the extracellular chloride concentration. Exerts its function also by modulating the activity of other ion channels and transporters. Contributes to the regulation of the pH and the ion content of the epithelial fluid layer. Modulates the activity of the epithelial sodium channel (ENaC) complex, in part by regulating the cell surface expression of the ENaC complex. May regulate bicarbonate secretion and salvage in epithelial cells by regulating the transporter SLC4A7. Can inhibit the chloride channel activity of ANO1. Plays a role in the chloride and bicarbonate homeostasis during sperm epididymal maturation and capacitation. The polypeptide is Cystic fibrosis transmembrane conductance regulator (Mustela putorius furo (European domestic ferret)).